We begin with the raw amino-acid sequence, 194 residues long: Lymphocyte antigen 6 complex locus protein G5b (194 aa).

Residues M1–G18 form the signal peptide. The UPAR/Ly6 domain occupies R26–G118. Intrachain disulfides connect C28-C55, C31-C40, C47-C73, C81-C98, and C99-C104. A glycan (N-linked (GlcNAc...) asparagine) is linked at N63. A glycan (N-linked (GlcNAc...) asparagine) is linked at N141.

Monomer. In terms of processing, N-glycosylated.

Its subcellular location is the secreted. The chain is Lymphocyte antigen 6 complex locus protein G5b (Ly6g5b) from Mus musculus (Mouse).